Here is a 336-residue protein sequence, read N- to C-terminus: Mitochondrial import receptor subunit TOM40 homolog (336 aa).

The tract at residues 1–58 is disordered; sequence MGNVLAASSPAPPAAGSPPAPGLVSVPPGFTMPPVAGLTPTPDKKETQEDRLPNPGTF. Residues 10-21 show a composition bias toward pro residues; it reads PAPPAAGSPPAP. Basic and acidic residues predominate over residues 42 to 52; the sequence is PDKKETQEDRL.

The protein belongs to the Tom40 family. As to quaternary structure, forms part of the preprotein translocase complex of the outer mitochondrial membrane (TOM complex). Interacts with mitochondrial targeting sequences.

The protein resides in the mitochondrion outer membrane. Functionally, channel-forming protein essential for import of protein precursors into mitochondria. This chain is Mitochondrial import receptor subunit TOM40 homolog (tomm40), found in Xenopus tropicalis (Western clawed frog).